A 203-amino-acid chain; its full sequence is Translation initiation factor IF-3 (203 aa).

The span at Glu172–Glu182 shows a compositional bias: basic and acidic residues. The tract at residues Glu172–Asp203 is disordered.

It belongs to the IF-3 family. Monomer.

Its subcellular location is the cytoplasm. Functionally, IF-3 binds to the 30S ribosomal subunit and shifts the equilibrium between 70S ribosomes and their 50S and 30S subunits in favor of the free subunits, thus enhancing the availability of 30S subunits on which protein synthesis initiation begins. The polypeptide is Translation initiation factor IF-3 (Helicobacter pylori (strain ATCC 700392 / 26695) (Campylobacter pylori)).